Reading from the N-terminus, the 479-residue chain is Glycogen synthase (479 aa).

Position 15 (K15) interacts with ADP-alpha-D-glucose.

The protein belongs to the glycosyltransferase 1 family. Bacterial/plant glycogen synthase subfamily.

The enzyme catalyses [(1-&gt;4)-alpha-D-glucosyl](n) + ADP-alpha-D-glucose = [(1-&gt;4)-alpha-D-glucosyl](n+1) + ADP + H(+). Its pathway is glycan biosynthesis; glycogen biosynthesis. In terms of biological role, synthesizes alpha-1,4-glucan chains using ADP-glucose. The sequence is that of Glycogen synthase from Roseobacter denitrificans (strain ATCC 33942 / OCh 114) (Erythrobacter sp. (strain OCh 114)).